The sequence spans 1004 residues: Centriolar coiled-coil protein of 110 kDa (1004 aa).

Residues 1-221 (MEEYEEFCEK…SCLAEVTPDP (221 aa)) are CEP97 binding. A coiled-coil region spans residues 51–90 (EKRKKIQEEKQKALDVQSRKQANRKKALLTRVQEILENVQ). The interval 64–82 (LDVQSRKQANRKKALLTRV) is calmodulin-binding. Residues 67 to 82 (QSRKQANRKKALLTRV) are required for interaction with CEP290. Disordered regions lie at residues 147–194 (PVNN…SSAS) and 239–279 (RELS…APPM). Ser-170 is modified (phosphoserine). Positions 243–252 (SRSLRNSLKR) are enriched in low complexity. Basic and acidic residues predominate over residues 253–276 (SVNETHSDRENDAAKASDCVKEKA). An interaction with CEP76 region spans residues 349–564 (ENKVKSLKGP…QTQTSRQQMD (216 aa)). 3 positions are modified to phosphoserine: Ser-364, Ser-370, and Ser-398. A disordered region spans residues 401–433 (GKEEAVDRTAPAAAETTNESETVPKSPTDLTGV). The segment covering 415–433 (ETTNESETVPKSPTDLTGV) has biased composition (polar residues). Residue Ser-550 is modified to Phosphoserine. The stretch at 641–699 (QELLKSKMLAFEEMRKRLEEQHAQQLSLLIAEQEREQEQLQKEIEEQEKMLKEKAVTTD) forms a coiled coil. Calmodulin-binding regions lie at residues 773 to 813 (GRAQ…DKLK) and 901 to 916 (VALS…RKKF). A disordered region spans residues 955 to 1004 (LSRQGTPKTSVKGVVQNRQKPSQSRVPNRAPVSGAYAGKTQRKRPNVATI). Residues 970–980 (QNRQKPSQSRV) show a composition bias toward polar residues. The segment covering 994–1004 (TQRKRPNVATI) has biased composition (basic residues).

As to quaternary structure, interacts with CALM1, CETN2, CEP76, CEP104, CEP290 and TALPID3. Interacts with CEP97. Seems to associate with discrete CETN2, CEP97 and CEP290-containing complexes. Interacts with NEURL4 and CCNF; these interactions are not mutually exclusive and both lead to CCP110 ubiquitination and proteasome-dependent degradation. Via its interaction with NEURL4, may indirectly interact with HERC2. Interacts with KIF24, leading to its recruitment to centrioles. Interacts with USP20 and USP33. Interacts with MPHOSPH9. Interacts (via N-terminal region) with ENKD1 (via central region); ENKD1 competes with CEP97 for binding to CCP110, destabilizing the interaction between CP110 and CEP97 which promotes the removal of CCP110 and CEP97 from the mother centriole and allows the initiation of ciliogenesis. In terms of processing, phosphorylated by CDKs. Ubiquitinated by the SCF(CCNF) during G2 phase, leading to its degradation by the proteasome and preventing centrosome reduplication. Deubiquitinated by USP33 in S and G2/M phase, leading to stabilize CCP110 during the period which centrioles duplicate and elongate. Ubiquitinated by the EDVP complex, leading to its degradation.

The protein resides in the cytoplasm. Its subcellular location is the cytoskeleton. The protein localises to the microtubule organizing center. It is found in the centrosome. It localises to the centriole. The protein resides in the cilium basal body. Functionally, necessary for centrosome duplication at different stages of procentriole formation. Acts as a key negative regulator of ciliogenesis in collaboration with CEP97 by capping the mother centriole thereby preventing cilia formation. Also involved in promoting ciliogenesis. May play a role in the assembly of the mother centriole subdistal appendages (SDA) thereby effecting the fusion of recycling endosomes to basal bodies during cilia formation. Required for correct spindle formation and has a role in regulating cytokinesis and genome stability via cooperation with CALM1 and CETN2. In Mus musculus (Mouse), this protein is Centriolar coiled-coil protein of 110 kDa (Ccp110).